The chain runs to 382 residues: Ribosomal RNA large subunit methyltransferase G (382 aa).

This sequence belongs to the methyltransferase superfamily. RlmG family.

The protein localises to the cytoplasm. The enzyme catalyses guanosine(1835) in 23S rRNA + S-adenosyl-L-methionine = N(2)-methylguanosine(1835) in 23S rRNA + S-adenosyl-L-homocysteine + H(+). Its function is as follows. Specifically methylates the guanine in position 1835 (m2G1835) of 23S rRNA. The sequence is that of Ribosomal RNA large subunit methyltransferase G from Pseudoalteromonas translucida (strain TAC 125).